A 307-amino-acid chain; its full sequence is UDP-3-O-acyl-N-acetylglucosamine deacetylase (307 aa).

Residues histidine 79, histidine 239, and aspartate 243 each coordinate Zn(2+). Histidine 266 acts as the Proton donor in catalysis.

It belongs to the LpxC family. Zn(2+) is required as a cofactor.

The catalysed reaction is a UDP-3-O-[(3R)-3-hydroxyacyl]-N-acetyl-alpha-D-glucosamine + H2O = a UDP-3-O-[(3R)-3-hydroxyacyl]-alpha-D-glucosamine + acetate. The protein operates within glycolipid biosynthesis; lipid IV(A) biosynthesis; lipid IV(A) from (3R)-3-hydroxytetradecanoyl-[acyl-carrier-protein] and UDP-N-acetyl-alpha-D-glucosamine: step 2/6. Its function is as follows. Catalyzes the hydrolysis of UDP-3-O-myristoyl-N-acetylglucosamine to form UDP-3-O-myristoylglucosamine and acetate, the committed step in lipid A biosynthesis. The polypeptide is UDP-3-O-acyl-N-acetylglucosamine deacetylase (Tolumonas auensis (strain DSM 9187 / NBRC 110442 / TA 4)).